The sequence spans 290 residues: 4-hydroxy-tetrahydrodipicolinate synthase (290 aa).

Position 44 (Thr44) interacts with pyruvate. Tyr132 (proton donor/acceptor) is an active-site residue. Lys160 acts as the Schiff-base intermediate with substrate in catalysis. Residue Ile202 participates in pyruvate binding.

Belongs to the DapA family. As to quaternary structure, homotetramer; dimer of dimers.

The protein localises to the cytoplasm. It catalyses the reaction L-aspartate 4-semialdehyde + pyruvate = (2S,4S)-4-hydroxy-2,3,4,5-tetrahydrodipicolinate + H2O + H(+). The protein operates within amino-acid biosynthesis; L-lysine biosynthesis via DAP pathway; (S)-tetrahydrodipicolinate from L-aspartate: step 3/4. Its function is as follows. Catalyzes the condensation of (S)-aspartate-beta-semialdehyde [(S)-ASA] and pyruvate to 4-hydroxy-tetrahydrodipicolinate (HTPA). This chain is 4-hydroxy-tetrahydrodipicolinate synthase, found in Cereibacter sphaeroides (strain ATCC 17025 / ATH 2.4.3) (Rhodobacter sphaeroides).